The primary structure comprises 542 residues: Prolyl 3-hydroxylase OGFOD1 (542 aa).

The Fe2OG dioxygenase domain occupies 134–239 (DLESTIDMSC…RLSISGWFHG (106 aa)). Fe cation-binding residues include H155 and D157. A 2-oxoglutarate-binding site is contributed by Y169. Residue H218 participates in Fe cation binding. Residue R230 participates in 2-oxoglutarate binding. The disordered stretch occupies residues 373–435 (EDEMNDKKEA…TKKESSVPTC (63 aa)). The span at 400 to 416 (ENNQTAISNNSQQSNEQ) shows a compositional bias: polar residues.

Belongs to the TPA1 family. Monomer. Requires Fe(2+) as cofactor. L-ascorbate is required as a cofactor.

It localises to the cytoplasm. It is found in the nucleus. It carries out the reaction [ribosomal protein uS12]-L-proline + 2-oxoglutarate + O2 = [ribosomal protein uS12]-(3S)-3-hydroxy-L-proline + succinate + CO2. Its function is as follows. Prolyl 3-hydroxylase that catalyzes 3-hydroxylation of 'Pro-62' of small ribosomal subunit uS12 (RPS23), thereby regulating protein translation termination efficiency. Involved in stress granule formation. This chain is Prolyl 3-hydroxylase OGFOD1 (OGFOD1), found in Pongo abelii (Sumatran orangutan).